A 377-amino-acid polypeptide reads, in one-letter code: Endoplasmic reticulum-Golgi intermediate compartment protein 2 (377 aa).

The Cytoplasmic segment spans residues 1 to 33 (MRRLNRKKTLSLVKELDAFPKVPESYVETSASG). A helical membrane pass occupies residues 34–54 (GTVSLIAFTTMALLTIMEFSV). At 55-319 (YQDTWMKYEY…PFWQFFVRLC (265 aa)) the chain is on the lumenal side. Residues 320–340 (GIVGGIFSTTGMLHGIGKFIV) traverse the membrane as a helical segment. The Cytoplasmic segment spans residues 341 to 377 (EIICCRFRLGSYKPVNSVPFEDGHTDNHLPLLENNTH).

It belongs to the ERGIC family. As to quaternary structure, may form a heteromeric complex composed of ERGIC1, ERGIC2 and ERGIC3. Interacts with ERGIC3, the interaction is required for the stable expression of both proteins. May interact with EEF1A1.

Its subcellular location is the endoplasmic reticulum-Golgi intermediate compartment membrane. It is found in the golgi apparatus. The protein resides in the cis-Golgi network membrane. It localises to the endoplasmic reticulum membrane. The protein localises to the cytoplasm. Its subcellular location is the nucleus. In terms of biological role, possible role in transport between endoplasmic reticulum and Golgi. The chain is Endoplasmic reticulum-Golgi intermediate compartment protein 2 (ERGIC2) from Macaca fascicularis (Crab-eating macaque).